The sequence spans 134 residues: Transcription antitermination protein NusB (134 aa).

This sequence belongs to the NusB family.

In terms of biological role, involved in transcription antitermination. Required for transcription of ribosomal RNA (rRNA) genes. Binds specifically to the boxA antiterminator sequence of the ribosomal RNA (rrn) operons. In Shewanella sp. (strain W3-18-1), this protein is Transcription antitermination protein NusB.